The chain runs to 244 residues: 3-oxoacyl-[acyl-carrier-protein] reductase FabG (244 aa).

NADP(+)-binding positions include 12 to 15 (GASR), Thr-37, 59 to 60 (NV), and Asn-86. Ser-138 contacts substrate. The active-site Proton acceptor is Tyr-151. NADP(+) is bound by residues 151–155 (YAAAK) and Ile-184.

This sequence belongs to the short-chain dehydrogenases/reductases (SDR) family. In terms of assembly, homotetramer.

The catalysed reaction is a (3R)-hydroxyacyl-[ACP] + NADP(+) = a 3-oxoacyl-[ACP] + NADPH + H(+). The protein operates within lipid metabolism; fatty acid biosynthesis. In terms of biological role, catalyzes the NADPH-dependent reduction of beta-ketoacyl-ACP substrates to beta-hydroxyacyl-ACP products, the first reductive step in the elongation cycle of fatty acid biosynthesis. The chain is 3-oxoacyl-[acyl-carrier-protein] reductase FabG (fabG) from Vibrio harveyi (Beneckea harveyi).